The primary structure comprises 224 residues: Urease accessory protein UreF (224 aa).

This sequence belongs to the UreF family. As to quaternary structure, ureD, UreF and UreG form a complex that acts as a GTP-hydrolysis-dependent molecular chaperone, activating the urease apoprotein by helping to assemble the nickel containing metallocenter of UreC. The UreE protein probably delivers the nickel.

It is found in the cytoplasm. Required for maturation of urease via the functional incorporation of the urease nickel metallocenter. This is Urease accessory protein UreF from Pseudomonas putida (strain GB-1).